The primary structure comprises 373 residues: Exonuclease V (373 aa).

Cys92 contacts [4Fe-4S] cluster. 2 residues coordinate Mg(2+): Asp182 and Glu196. [4Fe-4S] cluster contacts are provided by Cys343, Cys346, and Cys352.

This sequence belongs to the EXO5 family. In terms of assembly, monomer; monomeric form has weak exonuclease activity. Homodimer; homodimeric form is unsure but has much higher exonuclease activity, suggesting that it could homodimerize upon DNA-binding. Interacts with the replication protein A (RPA) complex. It depends on [4Fe-4S] cluster as a cofactor. The cofactor is Mg(2+).

The protein localises to the nucleus. It localises to the cytoplasm. It is found in the cytosol. Functionally, single-stranded DNA (ssDNA) bidirectional exonuclease involved in DNA repair. Probably involved in DNA repair following ultraviolet (UV) irradiation and interstrand cross-links (ICLs) damage. Has both 5'-3' and 3'-5' exonuclease activities with a strong preference for 5'-ends. Acts as a sliding exonuclease that loads at ssDNA ends and then slides along the ssDNA prior to cutting; however the sliding and the 3'-5' exonuclease activities are abolished upon binding to the replication protein A (RPA) complex that enforces 5'-directionality activity. This is Exonuclease V (EXO5) from Homo sapiens (Human).